A 142-amino-acid polypeptide reads, in one-letter code: MEIVINNVKNFSKWTLHNFTEKLRVFELRDKSDAELLKLLDDLKQELATFRVSKVTATGTSKLSKITLVRKAVAKVLTVYNQRKKEEARKKYKKLSKTPLNLRPKLTRAKRKGLTTKQLTMKTIKERKRAENLPKRKYALLA.

It belongs to the universal ribosomal protein uL29 family.

In Theileria annulata, this protein is Large ribosomal subunit protein uL29 (RPL35).